Reading from the N-terminus, the 102-residue chain is NADH-quinone oxidoreductase subunit K (102 aa).

Helical transmembrane passes span leucine 6–valine 26, isoleucine 30–valine 50, and valine 62–leucine 82.

This sequence belongs to the complex I subunit 4L family. NDH-1 is composed of 13 different subunits. Subunits NuoA, H, J, K, L, M, N constitute the membrane sector of the complex.

It localises to the cell inner membrane. It catalyses the reaction a quinone + NADH + 5 H(+)(in) = a quinol + NAD(+) + 4 H(+)(out). Its function is as follows. NDH-1 shuttles electrons from NADH, via FMN and iron-sulfur (Fe-S) centers, to quinones in the respiratory chain. The immediate electron acceptor for the enzyme in this species is believed to be ubiquinone. Couples the redox reaction to proton translocation (for every two electrons transferred, four hydrogen ions are translocated across the cytoplasmic membrane), and thus conserves the redox energy in a proton gradient. The sequence is that of NADH-quinone oxidoreductase subunit K from Pseudomonas fluorescens (strain SBW25).